Reading from the N-terminus, the 207-residue chain is Protein Nef (207 aa).

Gly-2 is lipidated: N-myristoyl glycine; by host. A Phosphoserine; by host modification is found at Ser-6. Residues 62–66 (EEEEE) are acidic; interacts with host PACS1 and PACS2; stabilizes the interaction of NEF/MHC-I with host AP1M1; necessary for MHC-I internalization. Residues 70–79 (PVRPQVPLRP) are SH3-binding; interaction with Src family tyrosine kinases. Residues 73-76 (PQVP) carry the PxxP; stabilizes the interaction of NEF/MHC-I with host AP1M1; necessary for MHC-I internalization motif. Positions 109-125 (EILDLWVYNTQGYFPDW) are mediates dimerization, Nef-PTE1 interaction. The binding to ATP6V1H stretch occupies residues 149–181 (VDPQDVEKANEGENNSLLHPMCQHGIEDPEREV). The Dileucine internalization motif; necessary for CD4 internalization motif lies at 165–166 (LL). A Diacidic; necessary for CD4 internalization motif is present at residues 175 to 176 (ED).

This sequence belongs to the lentivirus primate group Nef protein family. As to quaternary structure, monomer; cytosolic form. Homodimer; membrane bound form. Interacts with Nef associated p21-activated kinase (PAK2); this interaction activates PAK2. Associates with the Nef-MHC-I-AP1 complex; this complex is required for MHC-I internalization. Interacts (via C-terminus) with host PI3-kinase. Interacts with host PACS1; this interaction seems to be weak. Interacts with host PACS2. Interacts with host LCK and MAPK3; these interactions inhibit the kinase activity of the latter. Interacts with host ATP6V1H; this interaction may play a role in CD4 endocytosis. Associates with the CD4-Nef-AP2 complex; this complex is required for CD4 internalization. Interacts with host AP2 subunit alpha and AP2 subunit sigma2. Interacts with TCR-zeta chain; this interaction up-regulates the Fas ligand (FasL) surface expression. Interacts with host HCK, LYN, and SRC; these interactions activate the Src family kinases. Interacts with MAP3K5; this interaction inhibits the Fas and TNFR-mediated death signals. Interacts with beta-COP and PTE1. Interacts with human RACK1; this increases Nef phosphorylation by PKC. Interacts with TP53; this interaction decreases the half-life of TP53, protecting the infected cell against p53-mediated apoptosis. Post-translationally, the virion-associated Nef proteins are cleaved by the viral protease to release the soluble C-terminal core protein. Nef is probably cleaved concomitantly with viral structural proteins on maturation of virus particles. In terms of processing, myristoylated. Phosphorylated on serine residues, probably by host PKCdelta and theta.

It is found in the host cell membrane. It localises to the virion. The protein resides in the secreted. Its subcellular location is the host Golgi apparatus membrane. In terms of biological role, factor of infectivity and pathogenicity, required for optimal virus replication. Alters numerous pathways of T-lymphocyte function and down-regulates immunity surface molecules in order to evade host defense and increase viral infectivity. Alters the functionality of other immunity cells, like dendritic cells, monocytes/macrophages and NK cells. Functionally, in infected CD4(+) T-lymphocytes, down-regulates the surface MHC-I, mature MHC-II, CD4, CD28, CCR5 and CXCR4 molecules. Mediates internalization and degradation of host CD4 through the interaction of with the cytoplasmic tail of CD4, the recruitment of AP-2 (clathrin adapter protein complex 2), internalization through clathrin coated pits, and subsequent transport to endosomes and lysosomes for degradation. Diverts host MHC-I molecules to the trans-Golgi network-associated endosomal compartments by an endocytic pathway to finally target them for degradation. MHC-I down-regulation may involve AP-1 (clathrin adapter protein complex 1) or possibly Src family kinase-ZAP70/Syk-PI3K cascade recruited by PACS2. In consequence infected cells are masked for immune recognition by cytotoxic T-lymphocytes. Decreasing the number of immune receptors also prevents reinfection by more HIV particles (superinfection). Down-regulates host SERINC3 and SERINC5 thereby excluding these proteins from the viral particles. Virion infectivity is drastically higher when SERINC3 or SERINC5 are excluded from the viral envelope, because these host antiviral proteins impair the membrane fusion event necessary for subsequent virion penetration. Bypasses host T-cell signaling by inducing a transcriptional program nearly identical to that of anti-CD3 cell activation. Interaction with TCR-zeta chain up-regulates the Fas ligand (FasL). Increasing surface FasL molecules and decreasing surface MHC-I molecules on infected CD4(+) cells send attacking cytotoxic CD8+ T-lymphocytes into apoptosis. Its function is as follows. Plays a role in optimizing the host cell environment for viral replication without causing cell death by apoptosis. Protects the infected cells from apoptosis in order to keep them alive until the next virus generation is ready to strike. Inhibits the Fas and TNFR-mediated death signals by blocking MAP3K5/ASK1. Decreases the half-life of TP53, protecting the infected cell against p53-mediated apoptosis. Inhibits the apoptotic signals regulated by the Bcl-2 family proteins through the formation of a Nef/PI3-kinase/PAK2 complex that leads to activation of PAK2 and induces phosphorylation of host BAD. In terms of biological role, extracellular Nef protein targets CD4(+) T-lymphocytes for apoptosis by interacting with CXCR4 surface receptors. This is Protein Nef from Homo sapiens (Human).